The chain runs to 164 residues: Large ribosomal subunit protein uL10 (164 aa).

This sequence belongs to the universal ribosomal protein uL10 family. Part of the ribosomal stalk of the 50S ribosomal subunit. The N-terminus interacts with L11 and the large rRNA to form the base of the stalk. The C-terminus forms an elongated spine to which L12 dimers bind in a sequential fashion forming a multimeric L10(L12)X complex.

Its function is as follows. Forms part of the ribosomal stalk, playing a central role in the interaction of the ribosome with GTP-bound translation factors. The chain is Large ribosomal subunit protein uL10 from Helicobacter pylori (strain HPAG1).